We begin with the raw amino-acid sequence, 50 residues long: Fungus-induced-related protein 15 (50 aa).

Residues 1 to 21 (MNFYSLFVFIALIFSFNVVHG) form the signal peptide.

Its function is as follows. May have role in hypoxia response. This chain is Fungus-induced-related protein 15 (fipr-15), found in Caenorhabditis elegans.